Here is a 62-residue protein sequence, read N- to C-terminus: Rhodotorucin-A peptides type 1 (62 aa).

Positions 1 to 3 (MVA) are excised as a propeptide. Residue cysteine 14 is the site of S-farnesyl cysteine attachment. Positions 15–18 (TVSK) are excised as a propeptide. The S-farnesyl cysteine moiety is linked to residue cysteine 29. Positions 30–33 (TVSK) are excised as a propeptide. Cysteine 44 carries the S-farnesyl cysteine lipid modification. A propeptide spanning residues 45-48 (TVSK) is cleaved from the precursor. The S-farnesyl cysteine moiety is linked to residue cysteine 59. A propeptide spanning residues 60 to 62 (TVA) is cleaved from the precursor.

It localises to the cell membrane. Its function is as follows. Rhodotorucin-A is a mating pheromone in cells of mating type A of Rhodosporidium toruloides. The chain is Rhodotorucin-A peptides type 1 (RHA1) from Rhodotorula toruloides (Yeast).